The sequence spans 490 residues: ATP synthase subunit beta, chloroplastic (490 aa).

An ATP-binding site is contributed by 170 to 177; it reads GGAGVGKT.

This sequence belongs to the ATPase alpha/beta chains family. As to quaternary structure, F-type ATPases have 2 components, CF(1) - the catalytic core - and CF(0) - the membrane proton channel. CF(1) has five subunits: alpha(3), beta(3), gamma(1), delta(1), epsilon(1). CF(0) has four main subunits: a(1), b(1), b'(1) and c(9-12).

It is found in the plastid. It localises to the chloroplast thylakoid membrane. The enzyme catalyses ATP + H2O + 4 H(+)(in) = ADP + phosphate + 5 H(+)(out). Its function is as follows. Produces ATP from ADP in the presence of a proton gradient across the membrane. The catalytic sites are hosted primarily by the beta subunits. This is ATP synthase subunit beta, chloroplastic from Cressa truxillensis (Spreading alkaliweed).